The following is a 182-amino-acid chain: NADH-quinone oxidoreductase subunit I (182 aa).

4Fe-4S ferredoxin-type domains lie at 52–82 (LTRDPDGEERCVACNLCAVACPVGCISLQKA) and 92–121 (DFFRINFSRCIFCGLCEEACPTTAIQLTPD). Cysteine 62, cysteine 65, cysteine 68, cysteine 72, cysteine 101, cysteine 104, cysteine 107, and cysteine 111 together coordinate [4Fe-4S] cluster.

The protein belongs to the complex I 23 kDa subunit family. As to quaternary structure, NDH-1 is composed of 13 different subunits. Subunits NuoA, H, J, K, L, M, N constitute the membrane sector of the complex. The cofactor is [4Fe-4S] cluster.

The protein resides in the cell inner membrane. It catalyses the reaction a quinone + NADH + 5 H(+)(in) = a quinol + NAD(+) + 4 H(+)(out). In terms of biological role, NDH-1 shuttles electrons from NADH, via FMN and iron-sulfur (Fe-S) centers, to quinones in the respiratory chain. The immediate electron acceptor for the enzyme in this species is believed to be ubiquinone. Couples the redox reaction to proton translocation (for every two electrons transferred, four hydrogen ions are translocated across the cytoplasmic membrane), and thus conserves the redox energy in a proton gradient. The protein is NADH-quinone oxidoreductase subunit I of Pseudomonas savastanoi pv. phaseolicola (strain 1448A / Race 6) (Pseudomonas syringae pv. phaseolicola (strain 1448A / Race 6)).